The following is a 35-amino-acid chain: Putative neurotoxin (35 aa).

One can recognise an LCN-type CS-alpha/beta domain in the interval 1 to 35 (KEGYPKNSEGCKITCLFNDPYCKGLCINLSTQADY).

In terms of tissue distribution, expressed by the venom gland.

The protein resides in the secreted. Functionally, causes paralysis and death in insects (A.domestica). This chain is Putative neurotoxin, found in Rhopalurus junceus (Caribbean blue scorpion).